Consider the following 351-residue polypeptide: Probable RNA methyltransferase BAV1540 (351 aa).

The active-site Proton acceptor is glutamate 90. The Radical SAM core domain maps to 93–319; the sequence is LLPRDGLCVS…VKVRNSAGQD (227 aa). A disulfide bridge connects residues cysteine 100 and cysteine 324. [4Fe-4S] cluster is bound by residues cysteine 107, cysteine 111, and cysteine 114. S-adenosyl-L-methionine is bound by residues 152 to 153, serine 182, 205 to 207, and asparagine 281; these read GE and SLH. The S-methylcysteine intermediate role is filled by cysteine 324.

The protein belongs to the radical SAM superfamily. RlmN family. [4Fe-4S] cluster is required as a cofactor.

The protein resides in the cytoplasm. The sequence is that of Probable RNA methyltransferase BAV1540 from Bordetella avium (strain 197N).